A 582-amino-acid polypeptide reads, in one-letter code: Aspartate--tRNA ligase (582 aa).

An L-aspartate-binding site is contributed by E174. Residues 198-201 (QITK) are aspartate. R220 provides a ligand contact to L-aspartate. ATP contacts are provided by residues 220–222 (RDE) and Q229. H443 serves as a coordination point for L-aspartate. E477 lines the ATP pocket. R484 is a binding site for L-aspartate. 529 to 532 (GLDR) serves as a coordination point for ATP.

This sequence belongs to the class-II aminoacyl-tRNA synthetase family. Type 1 subfamily. In terms of assembly, homodimer.

The protein localises to the cytoplasm. The enzyme catalyses tRNA(Asp) + L-aspartate + ATP = L-aspartyl-tRNA(Asp) + AMP + diphosphate. Its function is as follows. Catalyzes the attachment of L-aspartate to tRNA(Asp) in a two-step reaction: L-aspartate is first activated by ATP to form Asp-AMP and then transferred to the acceptor end of tRNA(Asp). This chain is Aspartate--tRNA ligase, found in Streptococcus equi subsp. zooepidemicus (strain MGCS10565).